A 622-amino-acid chain; its full sequence is Chaperone protein HscA homolog (622 aa).

The protein belongs to the heat shock protein 70 family.

Chaperone involved in the maturation of iron-sulfur cluster-containing proteins. Has a low intrinsic ATPase activity which is markedly stimulated by HscB. This Burkholderia pseudomallei (strain K96243) protein is Chaperone protein HscA homolog.